A 333-amino-acid chain; its full sequence is 4-hydroxy-3-methylbut-2-enyl diphosphate reductase (333 aa).

A [4Fe-4S] cluster-binding site is contributed by cysteine 20. (2E)-4-hydroxy-3-methylbut-2-enyl diphosphate is bound by residues histidine 49 and histidine 85. Dimethylallyl diphosphate contacts are provided by histidine 49 and histidine 85. The isopentenyl diphosphate site is built by histidine 49 and histidine 85. A [4Fe-4S] cluster-binding site is contributed by cysteine 107. Histidine 135 is a binding site for (2E)-4-hydroxy-3-methylbut-2-enyl diphosphate. Dimethylallyl diphosphate is bound at residue histidine 135. Residue histidine 135 coordinates isopentenyl diphosphate. Glutamate 137 (proton donor) is an active-site residue. A (2E)-4-hydroxy-3-methylbut-2-enyl diphosphate-binding site is contributed by threonine 176. Cysteine 206 is a binding site for [4Fe-4S] cluster. (2E)-4-hydroxy-3-methylbut-2-enyl diphosphate-binding residues include serine 234, serine 235, asparagine 236, and serine 279. Serine 234, serine 235, asparagine 236, and serine 279 together coordinate dimethylallyl diphosphate. Residues serine 234, serine 235, asparagine 236, and serine 279 each contribute to the isopentenyl diphosphate site.

This sequence belongs to the IspH family. The cofactor is [4Fe-4S] cluster.

The enzyme catalyses isopentenyl diphosphate + 2 oxidized [2Fe-2S]-[ferredoxin] + H2O = (2E)-4-hydroxy-3-methylbut-2-enyl diphosphate + 2 reduced [2Fe-2S]-[ferredoxin] + 2 H(+). It catalyses the reaction dimethylallyl diphosphate + 2 oxidized [2Fe-2S]-[ferredoxin] + H2O = (2E)-4-hydroxy-3-methylbut-2-enyl diphosphate + 2 reduced [2Fe-2S]-[ferredoxin] + 2 H(+). Its pathway is isoprenoid biosynthesis; dimethylallyl diphosphate biosynthesis; dimethylallyl diphosphate from (2E)-4-hydroxy-3-methylbutenyl diphosphate: step 1/1. The protein operates within isoprenoid biosynthesis; isopentenyl diphosphate biosynthesis via DXP pathway; isopentenyl diphosphate from 1-deoxy-D-xylulose 5-phosphate: step 6/6. In terms of biological role, catalyzes the conversion of 1-hydroxy-2-methyl-2-(E)-butenyl 4-diphosphate (HMBPP) into a mixture of isopentenyl diphosphate (IPP) and dimethylallyl diphosphate (DMAPP). Acts in the terminal step of the DOXP/MEP pathway for isoprenoid precursor biosynthesis. In Rhizobium etli (strain CIAT 652), this protein is 4-hydroxy-3-methylbut-2-enyl diphosphate reductase.